Reading from the N-terminus, the 728-residue chain is Catalase-peroxidase (728 aa).

The segment at residues 91-218 (WHSAGTYRTA…LAAVQMGLIY (128 aa)) is a cross-link (tryptophyl-tyrosyl-methioninium (Trp-Tyr) (with M-244)). The Proton acceptor role is filled by H92. Positions 218–244 (YVNPEGPDGNPDPVAAARDIRDTFARM) form a cross-link, tryptophyl-tyrosyl-methioninium (Tyr-Met) (with W-91). Position 259 (H259) interacts with heme b.

The protein belongs to the peroxidase family. Peroxidase/catalase subfamily. In terms of assembly, homodimer or homotetramer. Heme b serves as cofactor. Post-translationally, formation of the three residue Trp-Tyr-Met cross-link is important for the catalase, but not the peroxidase activity of the enzyme.

It catalyses the reaction H2O2 + AH2 = A + 2 H2O. It carries out the reaction 2 H2O2 = O2 + 2 H2O. In terms of biological role, bifunctional enzyme with both catalase and broad-spectrum peroxidase activity. The protein is Catalase-peroxidase of Burkholderia thailandensis (strain ATCC 700388 / DSM 13276 / CCUG 48851 / CIP 106301 / E264).